We begin with the raw amino-acid sequence, 87 residues long: Small ribosomal subunit protein uS15c (87 aa).

The protein belongs to the universal ribosomal protein uS15 family. In terms of assembly, part of the 30S ribosomal subunit.

Its subcellular location is the plastid. The protein resides in the chloroplast. In Oenothera biennis (German evening primrose), this protein is Small ribosomal subunit protein uS15c (rps15).